The primary structure comprises 464 residues: tRNA modification GTPase MnmE (464 aa).

Arginine 28, glutamate 90, and arginine 129 together coordinate (6S)-5-formyl-5,6,7,8-tetrahydrofolate. Residues 226–385 (GLATAIVGRP…LEEKIAELFF (160 aa)) enclose the TrmE-type G domain. Residue asparagine 236 participates in K(+) binding. Residues 236–241 (NVGKSS), 255–261 (TDIAGTT), and 280–283 (DTAG) contribute to the GTP site. Mg(2+) is bound at residue serine 240. Residues threonine 255, isoleucine 257, and threonine 260 each coordinate K(+). Residue threonine 261 coordinates Mg(2+). A (6S)-5-formyl-5,6,7,8-tetrahydrofolate-binding site is contributed by lysine 464.

It belongs to the TRAFAC class TrmE-Era-EngA-EngB-Septin-like GTPase superfamily. TrmE GTPase family. As to quaternary structure, homodimer. Heterotetramer of two MnmE and two MnmG subunits. K(+) is required as a cofactor.

Its subcellular location is the cytoplasm. Its function is as follows. Exhibits a very high intrinsic GTPase hydrolysis rate. Involved in the addition of a carboxymethylaminomethyl (cmnm) group at the wobble position (U34) of certain tRNAs, forming tRNA-cmnm(5)s(2)U34. This chain is tRNA modification GTPase MnmE, found in Ligilactobacillus salivarius (strain UCC118) (Lactobacillus salivarius).